A 255-amino-acid chain; its full sequence is Coiled-coil domain-containing 92B (255 aa).

Positions 28 to 90 (LRDLHLEILR…AAANAELRRE (63 aa)) form a coiled coil. A disordered region spans residues 149 to 255 (QRLQAPRPGP…SQPSAPGDPE (107 aa)). Over residues 166–177 (PRRRALRARRPP) the composition is skewed to basic residues. Pro residues predominate over residues 242–255 (QPAPSQPSAPGDPE).

The polypeptide is Coiled-coil domain-containing 92B (Homo sapiens (Human)).